A 104-amino-acid polypeptide reads, in one-letter code: Large ribosomal subunit protein bL21 (104 aa).

Belongs to the bacterial ribosomal protein bL21 family. Part of the 50S ribosomal subunit. Contacts protein L20.

In terms of biological role, this protein binds to 23S rRNA in the presence of protein L20. The sequence is that of Large ribosomal subunit protein bL21 from Francisella tularensis subsp. tularensis (strain FSC 198).